The primary structure comprises 329 residues: Serpentine receptor class alpha-2 (329 aa).

The next 7 helical transmembrane spans lie at 25 to 45, 57 to 77, 104 to 124, 144 to 164, 188 to 208, 240 to 260, and 273 to 293; these read FVYL…VKIL, ILLV…GIEA, YYKI…GLLI, CAVI…LIVW, HYFT…TFIL, FLTV…IVLV, and LLVV…VILV.

Belongs to the nematode receptor-like protein sra family.

It localises to the membrane. In Caenorhabditis elegans, this protein is Serpentine receptor class alpha-2 (sra-2).